The primary structure comprises 580 residues: Proline--tRNA ligase (580 aa).

Belongs to the class-II aminoacyl-tRNA synthetase family. ProS type 1 subfamily. In terms of assembly, homodimer.

Its subcellular location is the cytoplasm. The catalysed reaction is tRNA(Pro) + L-proline + ATP = L-prolyl-tRNA(Pro) + AMP + diphosphate. Functionally, catalyzes the attachment of proline to tRNA(Pro) in a two-step reaction: proline is first activated by ATP to form Pro-AMP and then transferred to the acceptor end of tRNA(Pro). As ProRS can inadvertently accommodate and process non-cognate amino acids such as alanine and cysteine, to avoid such errors it has two additional distinct editing activities against alanine. One activity is designated as 'pretransfer' editing and involves the tRNA(Pro)-independent hydrolysis of activated Ala-AMP. The other activity is designated 'posttransfer' editing and involves deacylation of mischarged Ala-tRNA(Pro). The misacylated Cys-tRNA(Pro) is not edited by ProRS. The chain is Proline--tRNA ligase from Albidiferax ferrireducens (strain ATCC BAA-621 / DSM 15236 / T118) (Rhodoferax ferrireducens).